Here is a 156-residue protein sequence, read N- to C-terminus: Small ribosomal subunit protein uS7 (156 aa).

It belongs to the universal ribosomal protein uS7 family. As to quaternary structure, part of the 30S ribosomal subunit. Contacts proteins S9 and S11.

Functionally, one of the primary rRNA binding proteins, it binds directly to 16S rRNA where it nucleates assembly of the head domain of the 30S subunit. Is located at the subunit interface close to the decoding center, probably blocks exit of the E-site tRNA. The polypeptide is Small ribosomal subunit protein uS7 (Mycoplasmopsis agalactiae (strain NCTC 10123 / CIP 59.7 / PG2) (Mycoplasma agalactiae)).